Reading from the N-terminus, the 402-residue chain is Type II NADH:quinone oxidoreductase (402 aa).

Residues 12-16 (GAGYA), 39-40 (NK), and valine 83 contribute to the FAD site. Glutamate 172 is a catalytic residue. Residues aspartate 302, 319–320 (AQ), and lysine 379 each bind FAD.

This sequence belongs to the NADH dehydrogenase family. Requires FAD as cofactor.

It localises to the cell membrane. It catalyses the reaction a quinone + NADH + H(+) = a quinol + NAD(+). Alternative, nonproton pumping NADH:quinone oxidoreductase that delivers electrons to the respiratory chain by oxidation of NADH and reduction of quinones, and contributes to the regeneration of NAD(+). The protein is Type II NADH:quinone oxidoreductase of Staphylococcus haemolyticus (strain JCSC1435).